The following is a 316-amino-acid chain: DnaJ homolog subfamily B member 13 (316 aa).

The region spanning 4 to 68 is the J domain; that stretch reads DYYSVLGITR…MKRGIYDKFG (65 aa).

In terms of assembly, homodimer. Component of the axonemal radial spoke complex 1 (RS1), at least composed of spoke head proteins RSPH1, RSPH3, RSPH9 and the cilia-specific component RSPH4A or sperm-specific component RSPH6A, spoke stalk proteins RSPH14, DNAJB13, DYDC1, ROPN1L and NME5, and the anchor protein IQUB. Interacts with SUN5. Interacts with IQUB. In terms of tissue distribution, specifically expressed in testis and trachea.

Its subcellular location is the cell projection. The protein localises to the cilium. The protein resides in the flagellum. Functionally, functions as part of axonemal radial spoke complexes that play an important part in the motility of sperm and cilia. This Homo sapiens (Human) protein is DnaJ homolog subfamily B member 13 (DNAJB13).